We begin with the raw amino-acid sequence, 311 residues long: Aspartate carbamoyltransferase catalytic subunit (311 aa).

Residues arginine 55 and threonine 56 each coordinate carbamoyl phosphate. An L-aspartate-binding site is contributed by lysine 85. Carbamoyl phosphate contacts are provided by arginine 106, histidine 135, and glutamine 138. L-aspartate contacts are provided by arginine 168 and arginine 230. 2 residues coordinate carbamoyl phosphate: leucine 268 and proline 269.

Belongs to the aspartate/ornithine carbamoyltransferase superfamily. ATCase family. Heterododecamer (2C3:3R2) of six catalytic PyrB chains organized as two trimers (C3), and six regulatory PyrI chains organized as three dimers (R2).

It carries out the reaction carbamoyl phosphate + L-aspartate = N-carbamoyl-L-aspartate + phosphate + H(+). Its pathway is pyrimidine metabolism; UMP biosynthesis via de novo pathway; (S)-dihydroorotate from bicarbonate: step 2/3. Its function is as follows. Catalyzes the condensation of carbamoyl phosphate and aspartate to form carbamoyl aspartate and inorganic phosphate, the committed step in the de novo pyrimidine nucleotide biosynthesis pathway. This is Aspartate carbamoyltransferase catalytic subunit from Yersinia pseudotuberculosis serotype IB (strain PB1/+).